We begin with the raw amino-acid sequence, 300 residues long: Telomere repeat-binding factor 1 (300 aa).

Residues 1–58 (MGAPKQKWTQEEESALKSGVIKHGPGKWRTILKDPEFSGVLYLRSNVDLKDKWRNMSV) enclose the HTH myb-type domain. Residues 28–57 (WRTILKDPEFSGVLYLRSNVDLKDKWRNMS) constitute a DNA-binding region (H-T-H motif). 2 disordered regions span residues 93-119 (LQSDEENVDATSGLQVSSNPPPRRPNV) and 185-213 (NSTPLSSHRRKGLGVFGGKQRTSSLPSPK). The H15 domain maps to 117-185 (PNVRLDSLIM…KVKRKYRIPN (69 aa)). Residues 241–290 (EAAAVAAQAVAEAEAAMAEAEEAAKEAEAAEAEAEAAQAFAEEASKTLKG) adopt a coiled-coil conformation.

The protein belongs to the histone H1/H5 family. SMH subfamily. As to quaternary structure, forms a homodimer and heterodimers with TRB2 or TRB3. Interacts with POT1b, TRB2 and TRB3 through its H15 domain.

Its subcellular location is the nucleus. It localises to the nucleolus. The protein resides in the chromosome. Binds preferentially double-stranded telomeric repeats. The chain is Telomere repeat-binding factor 1 (TRB1) from Arabidopsis thaliana (Mouse-ear cress).